We begin with the raw amino-acid sequence, 561 residues long: Long-chain-fatty-acid--CoA ligase (561 aa).

ATP is bound at residue 213–224; sequence YTGGTTGVAKGA.

Belongs to the ATP-dependent AMP-binding enzyme family. It depends on Mg(2+) as a cofactor.

It is found in the membrane. The enzyme catalyses a long-chain fatty acid + ATP + CoA = a long-chain fatty acyl-CoA + AMP + diphosphate. It functions in the pathway lipid metabolism; fatty acid beta-oxidation. Catalyzes the esterification, concomitant with transport, of exogenous long-chain fatty acids into metabolically active CoA thioesters for subsequent degradation or incorporation into phospholipids. The chain is Long-chain-fatty-acid--CoA ligase (fadD) from Escherichia coli O6:H1 (strain CFT073 / ATCC 700928 / UPEC).